A 300-amino-acid polypeptide reads, in one-letter code: Ribosomal RNA small subunit methyltransferase H (300 aa).

Residues 46–48 (GGH), aspartate 65, phenylalanine 92, aspartate 107, and glutamine 114 contribute to the S-adenosyl-L-methionine site.

The protein belongs to the methyltransferase superfamily. RsmH family.

The protein localises to the cytoplasm. The catalysed reaction is cytidine(1402) in 16S rRNA + S-adenosyl-L-methionine = N(4)-methylcytidine(1402) in 16S rRNA + S-adenosyl-L-homocysteine + H(+). Its function is as follows. Specifically methylates the N4 position of cytidine in position 1402 (C1402) of 16S rRNA. In Prochlorococcus marinus subsp. pastoris (strain CCMP1986 / NIES-2087 / MED4), this protein is Ribosomal RNA small subunit methyltransferase H.